We begin with the raw amino-acid sequence, 354 residues long: Methionine import ATP-binding protein MetN (354 aa).

The 243-residue stretch at 8–250 (LDHIDITFRQ…PKEALTQKFI (243 aa)) folds into the ABC transporter domain. 42–49 (GYSGAGKS) contributes to the ATP binding site.

The protein belongs to the ABC transporter superfamily. Methionine importer (TC 3.A.1.24) family. As to quaternary structure, the complex is composed of two ATP-binding proteins (MetN), two transmembrane proteins (MetI) and a solute-binding protein (MetQ).

The protein resides in the cell membrane. It carries out the reaction L-methionine(out) + ATP + H2O = L-methionine(in) + ADP + phosphate + H(+). The enzyme catalyses D-methionine(out) + ATP + H2O = D-methionine(in) + ADP + phosphate + H(+). In terms of biological role, part of the ABC transporter complex MetNIQ involved in methionine import. Responsible for energy coupling to the transport system. The sequence is that of Methionine import ATP-binding protein MetN from Streptococcus pyogenes serotype M18 (strain MGAS8232).